A 172-amino-acid chain; its full sequence is uncharacterized protein (172 aa).

One can recognise a PfpI endopeptidase domain in the interval 3 to 171; that stretch reads KKVAIILSNE…FNREIVKQLQ (169 aa).

Belongs to the peptidase C56 family.

This is an uncharacterized protein from Staphylococcus haemolyticus (strain JCSC1435).